The sequence spans 373 residues: Response regulator aspartate phosphatase J (373 aa).

TPR repeat units lie at residues 99 to 135 and 146 to 179; these read YYFYYFRGMYEFKQKNFILAIDHYKHAEEKLEYVEDE and AEVYYHIKQTYFSMNYASQALDIYTKYELYGRRR. Residues Glu147, Tyr150, Gln181, Asp192, Tyr217, Asn225, His228, Gln260, Tyr297, Lys300, and Asp335 each coordinate L-glutamyl-L-arginyl-glycyl-L-methionyl-L-threonine. 2 TPR repeats span residues 220-253 and 259-292; these read AAAYYNVGHCKYSLGDYKEAEGYFKTAAAIFEEH and VQAVFSLTHIYCKEGKYDKAVEAYDRGIKSAAEW. Residues 334–367 form a TPR 5 repeat; the sequence is EDLLHDTAERFNQLEHYESAAFFYRRLMNIKKKL.

It belongs to the Rap family. As to quaternary structure, monomer in solution. Homodimer.

It localises to the cytoplasm. With respect to regulation, inhibited in vitro by the competence and sporulation stimulating factor (CSF), encoded by phrC. However, CSF has at least three targets (RapB, RapC, and RapJ) and the physiological importance of RapJ inhibition by CSF is unknown. Interaction with CSF induces a conformational change in RapJ. Functionally, involved in the regulation of sporulation. Acts as a phosphatase that specifically dephosphorylates the sporulation initiation phosphotransferase Spo0F and inhibits its activity. In Bacillus subtilis (strain 168), this protein is Response regulator aspartate phosphatase J (rapJ).